The primary structure comprises 637 residues: DNA gyrase subunit B (637 aa).

The region spanning 422 to 536 (CEVYIVEGDS…AGYVYLAMPP (115 aa)) is the Toprim domain. Glutamate 428, aspartate 501, and aspartate 503 together coordinate Mg(2+).

It belongs to the type II topoisomerase GyrB family. In terms of assembly, heterotetramer, composed of two GyrA and two GyrB chains. In the heterotetramer, GyrA contains the active site tyrosine that forms a transient covalent intermediate with DNA, while GyrB binds cofactors and catalyzes ATP hydrolysis. Mg(2+) is required as a cofactor. Mn(2+) serves as cofactor. Requires Ca(2+) as cofactor.

The protein localises to the cytoplasm. The catalysed reaction is ATP-dependent breakage, passage and rejoining of double-stranded DNA.. A type II topoisomerase that negatively supercoils closed circular double-stranded (ds) DNA in an ATP-dependent manner to modulate DNA topology and maintain chromosomes in an underwound state. Negative supercoiling favors strand separation, and DNA replication, transcription, recombination and repair, all of which involve strand separation. Also able to catalyze the interconversion of other topological isomers of dsDNA rings, including catenanes and knotted rings. Type II topoisomerases break and join 2 DNA strands simultaneously in an ATP-dependent manner. The polypeptide is DNA gyrase subunit B (Treponema pallidum (strain Nichols)).